The primary structure comprises 107 residues: Large ribosomal subunit protein eL21 (107 aa).

This sequence belongs to the eukaryotic ribosomal protein eL21 family.

This chain is Large ribosomal subunit protein eL21 (rpl21e), found in Aeropyrum pernix (strain ATCC 700893 / DSM 11879 / JCM 9820 / NBRC 100138 / K1).